Consider the following 635-residue polypeptide: Threonine--tRNA ligase (635 aa).

Residues 1–61 (MIKITLKDGK…HKDSSLEILT (61 aa)) enclose the TGS domain. Residues 242 to 532 (DHRKLGKELD…LIEQYAGAFP (291 aa)) form a catalytic region. C333, H384, and H509 together coordinate Zn(2+).

This sequence belongs to the class-II aminoacyl-tRNA synthetase family. In terms of assembly, homodimer. It depends on Zn(2+) as a cofactor.

Its subcellular location is the cytoplasm. It carries out the reaction tRNA(Thr) + L-threonine + ATP = L-threonyl-tRNA(Thr) + AMP + diphosphate + H(+). Catalyzes the attachment of threonine to tRNA(Thr) in a two-step reaction: L-threonine is first activated by ATP to form Thr-AMP and then transferred to the acceptor end of tRNA(Thr). Also edits incorrectly charged L-seryl-tRNA(Thr). This chain is Threonine--tRNA ligase, found in Clostridium botulinum (strain Okra / Type B1).